We begin with the raw amino-acid sequence, 85 residues long: Alpha-defensin 14 (85 aa).

The signal sequence occupies residues 1-11; the sequence is ALVLLAFQVQA. A propeptide spanning residues 12–50 is cleaved from the precursor; that stretch reads DPIQNTDEETKTEEQPGEDDQAVSVSFGDPEGSSLQEES. The tract at residues 13–48 is disordered; it reads PIQNTDEETKTEEQPGEDDQAVSVSFGDPEGSSLQE. 3 disulfide bridges follow: Cys56–Cys84, Cys58–Cys73, and Cys63–Cys83.

Belongs to the alpha-defensin family. As to expression, paneth cells of the small bowel.

The protein resides in the secreted. Probably contributes to the antimicrobial barrier function of the small bowel mucosa. This chain is Alpha-defensin 14 (Defa14), found in Mus musculus (Mouse).